Here is a 384-residue protein sequence, read N- to C-terminus: Alanine racemase (384 aa).

Residue lysine 46 is the Proton acceptor; specific for D-alanine of the active site. N6-(pyridoxal phosphate)lysine is present on lysine 46. Residue arginine 144 coordinates substrate. Tyrosine 278 functions as the Proton acceptor; specific for L-alanine in the catalytic mechanism. Residue methionine 326 participates in substrate binding.

This sequence belongs to the alanine racemase family. Pyridoxal 5'-phosphate is required as a cofactor.

It carries out the reaction L-alanine = D-alanine. It participates in amino-acid biosynthesis; D-alanine biosynthesis; D-alanine from L-alanine: step 1/1. Its function is as follows. Catalyzes the interconversion of L-alanine and D-alanine. May also act on other amino acids. This Frankia casuarinae (strain DSM 45818 / CECT 9043 / HFP020203 / CcI3) protein is Alanine racemase (alr).